We begin with the raw amino-acid sequence, 528 residues long: Na(+)/H(+) antiporter NhaB (528 aa).

10 helical membrane passes run 28 to 50, 67 to 87, 98 to 118, 140 to 160, 240 to 260, 305 to 325, 350 to 370, 391 to 411, 449 to 469, and 476 to 496; these read FLVI…VLVV, PGGL…SQVL, LLLV…LFVF, AFLS…AVAV, FFLR…FTCF, ALIG…VGLI, EEAL…GVII, LVIF…VFVG, ATPN…APLI, and MVWM…MAIE.

Belongs to the NhaB Na(+)/H(+) (TC 2.A.34) antiporter family.

The protein localises to the cell inner membrane. The catalysed reaction is 2 Na(+)(in) + 3 H(+)(out) = 2 Na(+)(out) + 3 H(+)(in). Functionally, na(+)/H(+) antiporter that extrudes sodium in exchange for external protons. The protein is Na(+)/H(+) antiporter NhaB of Shewanella frigidimarina (strain NCIMB 400).